Consider the following 527-residue polypeptide: MELTLWTYEGPPHVGAMRIAASMQGVHYVLHAPQGDTYADLLFTMIERRDQRPPVTYTTFQARDLGGDTAELVKRSIRDAADRFQPQALLVGESCTAELIQDQPGALAQGMNLPMPVVSLELPAYSKKENWGAAETFYQLIRTLLKPQLPPAGLSKPDPKRWQEQGRRPRVNLLGPSLLGFRCRDDVREVRVLLDELGIDTHVVAPLGASPEDLRRIPQAEANICLYPEVADSSCRWLERQFGMPTVSTVPIGIGATEMFCRELQELLGLEPTSQGSGQSRMPWYSRSVDSTYLTGKRVFIFADATHAIAAARIASRELGFEVVGLGSYSREQARAVRAAAEELGLAALISDNYLEVEAAMAEAAPELVLGTQMERHSAKRLGIPCAVISSPLHVQDVPARYAPQMGWEGANVIFDSWVHPLMMGLEEHLIGMFRHDFEFVDGHMSHKGEKPPGPEAADPITLAAEANGVDEAELLRWAPSGQAELSRIPFFVRGKVKRNTESYAQERGIINITDEVLYEAKAHFSR.

Aspartate 36 contacts [4Fe-4S] cluster. Aspartate 290 acts as the Proton donor in catalysis. A substrate-binding site is contributed by glycine 425–leucine 426.

This sequence belongs to the ChlB/BchB/BchZ family. As to quaternary structure, protochlorophyllide reductase is composed of three subunits; ChlL, ChlN and ChlB. Forms a heterotetramer of two ChlB and two ChlN subunits. Requires [4Fe-4S] cluster as cofactor.

It catalyses the reaction chlorophyllide a + oxidized 2[4Fe-4S]-[ferredoxin] + 2 ADP + 2 phosphate = protochlorophyllide a + reduced 2[4Fe-4S]-[ferredoxin] + 2 ATP + 2 H2O. It participates in porphyrin-containing compound metabolism; chlorophyll biosynthesis (light-independent). Component of the dark-operative protochlorophyllide reductase (DPOR) that uses Mg-ATP and reduced ferredoxin to reduce ring D of protochlorophyllide (Pchlide) to form chlorophyllide a (Chlide). This reaction is light-independent. The NB-protein (ChlN-ChlB) is the catalytic component of the complex. The polypeptide is Light-independent protochlorophyllide reductase subunit B (Synechococcus sp. (strain RCC307)).